Consider the following 421-residue polypeptide: Testin (421 aa).

Residues 92-199 form the PET domain; the sequence is MILTNPVAAK…GDVKLPREMD (108 aa). A disordered region spans residues 134–164; the sequence is KQPVAGSEGAQYRKKQLAKQLPAHDQDPSKC. The segment covering 155 to 164 has biased composition (basic and acidic residues); sequence PAHDQDPSKC. 3 consecutive LIM zinc-binding domains span residues 234-297, 299-359, and 362-421; these read YSCY…CDSE, PRCA…NHAV, and QGCH…KMMS.

It belongs to the prickle / espinas / testin family. In terms of assembly, interacts via LIM domain 1 with ZYX. Interacts (via LIM domain 3) with ENAH and VASP. Interacts with ALKBH4, talin, actin, alpha-actinin, GRIP1 and PXN. Interacts (via LIM domain 2) with ACTL7A (via N-terminus). Heterodimer with ACTL7A; the heterodimer interacts with ENAH to form a heterotrimer.

It is found in the cytoplasm. It localises to the cell junction. The protein resides in the focal adhesion. Its function is as follows. Scaffold protein that may play a role in cell adhesion, cell spreading and in the reorganization of the actin cytoskeleton. Plays a role in the regulation of cell proliferation. May act as a tumor suppressor. This is Testin (TES) from Rhinolophus ferrumequinum (Greater horseshoe bat).